A 106-amino-acid chain; its full sequence is Small ribosomal subunit protein uS10 (106 aa).

Belongs to the universal ribosomal protein uS10 family. In terms of assembly, part of the 30S ribosomal subunit.

In terms of biological role, involved in the binding of tRNA to the ribosomes. This is Small ribosomal subunit protein uS10 from Pyrobaculum aerophilum (strain ATCC 51768 / DSM 7523 / JCM 9630 / CIP 104966 / NBRC 100827 / IM2).